Reading from the N-terminus, the 292-residue chain is Cbb3-type cytochrome c oxidase subunit CcoP (292 aa).

Helical transmembrane passes span 11–31 and 62–82; these read FGLIAALVILVLTIYESSSLI and VGWIASFMCTIVWAFWYFFFG. 2 Cytochrome c domains span residues 116-195 and 205-288; these read ELVD…MAEI and QLID…QSLK. Residues Cys-129, Cys-132, His-133, Met-174, Cys-219, Cys-222, His-223, and Met-264 each contribute to the heme c site.

It belongs to the CcoP / FixP family. Component of the cbb3-type cytochrome c oxidase at least composed of CcoN, CcoO, CcoQ and CcoP. Heme c serves as cofactor.

The protein resides in the cell inner membrane. Its pathway is energy metabolism; oxidative phosphorylation. C-type cytochrome. Part of the cbb3-type cytochrome c oxidase complex. CcoP subunit is required for transferring electrons from donor cytochrome c via its heme groups to CcoO subunit. From there, electrons are shuttled to the catalytic binuclear center of CcoN subunit where oxygen reduction takes place. The complex also functions as a proton pump. The protein is Cbb3-type cytochrome c oxidase subunit CcoP of Helicobacter pylori (strain 52).